Consider the following 201-residue polypeptide: Peptidyl-tRNA hydrolase (201 aa).

Position 15 (Tyr15) interacts with tRNA. The active-site Proton acceptor is the His20. TRNA is bound by residues Tyr66, Asn68, and Asn114.

This sequence belongs to the PTH family. Monomer.

Its subcellular location is the cytoplasm. It carries out the reaction an N-acyl-L-alpha-aminoacyl-tRNA + H2O = an N-acyl-L-amino acid + a tRNA + H(+). Hydrolyzes ribosome-free peptidyl-tRNAs (with 1 or more amino acids incorporated), which drop off the ribosome during protein synthesis, or as a result of ribosome stalling. Its function is as follows. Catalyzes the release of premature peptidyl moieties from peptidyl-tRNA molecules trapped in stalled 50S ribosomal subunits, and thus maintains levels of free tRNAs and 50S ribosomes. The protein is Peptidyl-tRNA hydrolase of Burkholderia mallei (strain ATCC 23344).